The following is a 135-amino-acid chain: HTH-type transcriptional regulator ZntR homolog (135 aa).

Residues M1–L69 form the HTH merR-type domain. Positions G4–Q23 form a DNA-binding region, H-T-H motif.

Functionally, transcriptional regulator. This is HTH-type transcriptional regulator ZntR homolog (zntR) from Haemophilus influenzae (strain ATCC 51907 / DSM 11121 / KW20 / Rd).